Consider the following 289-residue polypeptide: Protease HtpX homolog (289 aa).

2 helical membrane passes run 7-26 (TAAL…YWVI) and 31-48 (GLII…FSWY). Zn(2+) is bound at residue histidine 132. Glutamate 133 is a catalytic residue. Zn(2+) is bound at residue histidine 136. Transmembrane regions (helical) follow at residues 151-171 (VAGA…FGGG) and 182-202 (LGVL…QLAI). Glutamate 207 lines the Zn(2+) pocket.

Belongs to the peptidase M48B family. Requires Zn(2+) as cofactor.

The protein localises to the cell inner membrane. This chain is Protease HtpX homolog, found in Nostoc punctiforme (strain ATCC 29133 / PCC 73102).